Reading from the N-terminus, the 142-residue chain is Snaclec GPIB-binding protein subunit alpha (142 aa).

Intrachain disulfides connect Cys-6–Cys-17, Cys-39–Cys-136, and Cys-111–Cys-128. In terms of domain architecture, C-type lectin spans His-13–Lys-137.

Belongs to the snaclec family. As to quaternary structure, heterodimer of subunits alpha and beta; disulfide-linked. As to expression, expressed by the venom gland.

It localises to the secreted. Functionally, binds to platelet GPIb (subunit alpha) (GP1BA) and functions as a receptor blocker for vWF binding to GPIb. The platelet GPIb-binding site resides on the GPIB-BP subunit beta and not on the alpha subunit. At a final concentration of 104 nM totally abolishes vWF-dependent shear-induced platelet aggregation (SIPA) at a high shear stress, but had no effect on SIPA at a low shear stress. This is Snaclec GPIB-binding protein subunit alpha from Bothrops jararaca (Jararaca).